The chain runs to 210 residues: Uracil phosphoribosyltransferase (210 aa).

5-phospho-alpha-D-ribose 1-diphosphate-binding positions include Arg80, Arg105, and 132-140; that span reads DPMLATGGS. Residues Ile195 and 200-202 each bind uracil; that span reads GDA. Position 201 (Asp201) interacts with 5-phospho-alpha-D-ribose 1-diphosphate.

This sequence belongs to the UPRTase family. Mg(2+) is required as a cofactor.

The enzyme catalyses UMP + diphosphate = 5-phospho-alpha-D-ribose 1-diphosphate + uracil. It functions in the pathway pyrimidine metabolism; UMP biosynthesis via salvage pathway; UMP from uracil: step 1/1. Its activity is regulated as follows. Allosterically activated by GTP. In terms of biological role, catalyzes the conversion of uracil and 5-phospho-alpha-D-ribose 1-diphosphate (PRPP) to UMP and diphosphate. The polypeptide is Uracil phosphoribosyltransferase (Caldanaerobacter subterraneus subsp. tengcongensis (strain DSM 15242 / JCM 11007 / NBRC 100824 / MB4) (Thermoanaerobacter tengcongensis)).